The chain runs to 890 residues: Agglutinin-like protein ARB_02240 (890 aa).

A signal peptide spans 1–20 (MRLTTSVLLWAATSVLQADA). N-linked (GlcNAc...) asparagine glycans are attached at residues Asn106, Asn217, Asn583, and Asn654. The segment at 680–872 (IPSGPTTRPE…GGAGSLSPST (193 aa)) is disordered. Composition is skewed to low complexity over residues 693–753 (TSST…TDSS) and 760–790 (TTST…HSST). Polar residues predominate over residues 791 to 802 (GSDPESTNTRHP). Composition is skewed to low complexity over residues 803-812 (SSTASGSTTT) and 821-837 (SSSS…TATT). Gly residues predominate over residues 838 to 848 (TGGGSIPGSGT). The GPI-anchor amidated glycine moiety is linked to residue Gly864. The propeptide at 865-890 (AGSLSPSTWGKVVTCISSMALLVAFI) is removed in mature form.

Belongs to the ALS family. In terms of processing, the GPI-anchor is attached to the protein in the endoplasmic reticulum and serves to target the protein to the cell surface. There, the glucosamine-inositol phospholipid moiety is cleaved off and the GPI-modified mannoprotein is covalently attached via its lipidless GPI glycan remnant to the 1,6-beta-glucan of the outer cell wall layer.

It is found in the secreted. The protein resides in the cell membrane. It localises to the cell wall. In terms of biological role, cell surface adhesion protein which mediates cell agglutination and host tissue adherence. This chain is Agglutinin-like protein ARB_02240, found in Arthroderma benhamiae (strain ATCC MYA-4681 / CBS 112371) (Trichophyton mentagrophytes).